A 270-amino-acid polypeptide reads, in one-letter code: uncharacterized protein (270 aa).

One can recognise an HTH lysR-type domain in the interval 1-50 (LTEVVKAQSFTKAAENLYTSQPSISRDIKRLENDYDVKVFEFKHSKMTLT). Residues 10 to 29 (FTKAAENLYTSQPSISRDIK) constitute a DNA-binding region (H-T-H motif).

Belongs to the LysR transcriptional regulatory family.

This is an uncharacterized protein from Staphylococcus xylosus.